The following is a 468-amino-acid chain: Ribulose bisphosphate carboxylase large chain (468 aa).

K4 carries the post-translational modification N6,N6,N6-trimethyllysine. N113 and T163 together coordinate substrate. The active-site Proton acceptor is the K165. Residue K167 coordinates substrate. K191, D193, and E194 together coordinate Mg(2+). At K191 the chain carries N6-carboxylysine. The Proton acceptor role is filled by H284. Positions 285, 317, and 369 each coordinate substrate.

Belongs to the RuBisCO large chain family. Type I subfamily. In terms of assembly, heterohexadecamer of 8 large chains and 8 small chains; disulfide-linked. The disulfide link is formed within the large subunit homodimers. It depends on Mg(2+) as a cofactor. In terms of processing, the disulfide bond which can form in the large chain dimeric partners within the hexadecamer appears to be associated with oxidative stress and protein turnover.

It localises to the plastid. It is found in the chloroplast. It catalyses the reaction 2 (2R)-3-phosphoglycerate + 2 H(+) = D-ribulose 1,5-bisphosphate + CO2 + H2O. The catalysed reaction is D-ribulose 1,5-bisphosphate + O2 = 2-phosphoglycolate + (2R)-3-phosphoglycerate + 2 H(+). Its function is as follows. RuBisCO catalyzes two reactions: the carboxylation of D-ribulose 1,5-bisphosphate, the primary event in carbon dioxide fixation, as well as the oxidative fragmentation of the pentose substrate in the photorespiration process. Both reactions occur simultaneously and in competition at the same active site. This is Ribulose bisphosphate carboxylase large chain from Pandorea jasminoides (Bower vine).